We begin with the raw amino-acid sequence, 494 residues long: Protein transport protein Sec61 subunit alpha (494 aa).

10 helical membrane-spanning segments follow: residues 36 to 56 (LWTSIVVFLYLVCCQIPLYGI), 79 to 99 (LMELGISPIVTSGLVMQLLAG), 122 to 142 (LLGILITIGESVAYVLSGMYG), 147 to 167 (LGAGNAILIIVQLFTSGIIVI), 177 to 197 (YGIGSAISLFIATNVCESIVW), 249 to 269 (LLATVLVFVLVVYFQGFQVEL), 294 to 314 (MPIILQTALVSNLYFISQILY), 359 to 379 (IVSDPVHALLYIIFILASCAL), 426 to 446 (AAFGGMCIGALSIVADFMGAI), and 450 to 470 (TGILLAVTTIYQSWETILLAV).

It belongs to the SecY/SEC61-alpha family. As to quaternary structure, heterotrimeric complex composed of SEC61-alpha, SEC61-beta and SEC61-gamma.

It is found in the endoplasmic reticulum membrane. In terms of biological role, appears to play a crucial role in the insertion of secretory and membrane polypeptides into the ER. It is required for assembly of membrane and secretory proteins. This chain is Protein transport protein Sec61 subunit alpha, found in Pyrenomonas salina.